The primary structure comprises 255 residues: Small ribosomal subunit protein eS4 (255 aa).

One can recognise an S4 RNA-binding domain in the interval 44–107 (IPLLILVRDV…DEYYRMIPYP (64 aa)).

The protein belongs to the eukaryotic ribosomal protein eS4 family.

The protein is Small ribosomal subunit protein eS4 of Ignicoccus hospitalis (strain KIN4/I / DSM 18386 / JCM 14125).